A 194-amino-acid chain; its full sequence is Cysteine and glycine-rich protein 2 (194 aa).

Residues 10–61 enclose the LIM zinc-binding 1 domain; it reads CGACGRTVYHAEEVQCDGRSFHRCCFLCMVCRKNLDSTTVAIHDAEVYCKSC. The short motif at 64 to 69 is the Nuclear localization signal element; sequence KKYGPK. The 52-residue stretch at 120 to 171 folds into the LIM zinc-binding 2 domain; sequence CSRCGDSVYAAEKVIGAGKPWHKNCFRCAKCGKSLESTTLTEKEGEIYCKGC.

The protein localises to the nucleus. Functionally, totally down-regulated in transformed cells. May therefore take part in the control of cell growth and differentiation. The sequence is that of Cysteine and glycine-rich protein 2 (CSRP2) from Gallus gallus (Chicken).